Consider the following 135-residue polypeptide: MIDAKQLNSLALAYMGDAVYEQYIRYHLLQKGKVRPNQLHRLGTSFVSAKAQAKVVYHLLETAFLTEEEEAVLRRGRNANSGTVPKNTDVQTYRHSTAFEALIGYHHLLNNRERLDEIVYKAIAVLEEQEGGTSS.

The active site involves aspartate 17.

This sequence belongs to the MrnC RNase family. In terms of assembly, homodimer. Mg(2+) is required as a cofactor.

It is found in the cytoplasm. Involved in correct processing of both the 5' and 3' ends of 23S rRNA precursor. Processes 30S rRNA precursor transcript even in absence of ribonuclease 3 (Rnc); Rnc processes 30S rRNA into smaller rRNA precursors. This chain is Mini-ribonuclease 3, found in Bacillus cereus (strain ATCC 14579 / DSM 31 / CCUG 7414 / JCM 2152 / NBRC 15305 / NCIMB 9373 / NCTC 2599 / NRRL B-3711).